Here is a 3933-residue protein sequence, read N- to C-terminus: Circularly permutated Ras protein 2 (3933 aa).

A coiled-coil region spans residues 12–46; that stretch reads VHEVKKQELESILLQQEQEKQAKEEKESIKDTDDK. 4 disordered regions span residues 23–101, 136–189, 1022–1054, and 2817–2839; these read ILLQ…IEKK, DIRE…RKET, ITTTTTTTTTNNNNNNNEVGESTTPNLPITTTT, and NNNNNNNRYNTPVRNGNIGRPTR. Over residues 28–62 the composition is skewed to basic and acidic residues; the sequence is EQEKQAKEEKESIKDTDDKPIEDTEHSTNNDKPIE. Over residues 70–92 the composition is skewed to low complexity; that stretch reads TPTTTTTTKPTDEASSSSNNNNN. Positions 136–145 are enriched in basic and acidic residues; that stretch reads DIREPTDKPF. Residues 146–156 are compositionally biased toward polar residues; it reads ENTSNIETTRQ. Residues 167-215 adopt a coiled-coil conformation; that stretch reads KTEAERLEQEQKQKQYDENRKETDRKLELELERLKNKKEEVEQIRAYFQ. Positions 168 to 189 are enriched in basic and acidic residues; it reads TEAERLEQEQKQKQYDENRKET. The span at 2817–2826 shows a compositional bias: low complexity; that stretch reads NNNNNNNRYN. GTP is bound by residues 2853 to 2857, 2913 to 2916, and 2976 to 2983; these read DTAGQ, TKAD, and GDGGIGKS. Disordered regions lie at residues 3036-3086, 3107-3142, and 3733-3754; these read LQSA…LSSR, RKSSLVEEESKRQYDDDDESKSESSEYDDDDDQDYE, and VIEPSSNVDENSEKVETQPSSS. The span at 3070-3086 shows a compositional bias: low complexity; sequence PSSSSTRTSVSTSLSSR. A compositionally biased stretch (basic and acidic residues) spans 3107 to 3120; that stretch reads RKSSLVEEESKRQY. Positions 3121–3141 are enriched in acidic residues; sequence DDDDESKSESSEYDDDDDQDY.

This sequence belongs to the small GTPase superfamily. CpRas family.

The sequence is that of Circularly permutated Ras protein 2 (cpras2) from Dictyostelium discoideum (Social amoeba).